A 301-amino-acid chain; its full sequence is 4-hydroxy-tetrahydrodipicolinate synthase (301 aa).

Pyruvate is bound at residue threonine 46. Catalysis depends on tyrosine 135, which acts as the Proton donor/acceptor. Lysine 163 serves as the catalytic Schiff-base intermediate with substrate. Residue isoleucine 205 participates in pyruvate binding.

Belongs to the DapA family. Homotetramer; dimer of dimers.

The protein localises to the cytoplasm. The enzyme catalyses L-aspartate 4-semialdehyde + pyruvate = (2S,4S)-4-hydroxy-2,3,4,5-tetrahydrodipicolinate + H2O + H(+). It functions in the pathway amino-acid biosynthesis; L-lysine biosynthesis via DAP pathway; (S)-tetrahydrodipicolinate from L-aspartate: step 3/4. Its function is as follows. Catalyzes the condensation of (S)-aspartate-beta-semialdehyde [(S)-ASA] and pyruvate to 4-hydroxy-tetrahydrodipicolinate (HTPA). This is 4-hydroxy-tetrahydrodipicolinate synthase from Lacticaseibacillus casei (strain BL23) (Lactobacillus casei).